The chain runs to 281 residues: MAETQNDPLLPGYSFNAHLVAGLTPIEANGYLDFFIDRPLGMKGYILNLTIRGEGVINNNGEQFVCRPGDILLFPPGEIHHYGRHPDASEWYHQWVYFRPRAYWQEWLTWPTIFAQTGFFRPDEARQPHFSELFGQIISAGQGEGRYSELLAINLLEQLLLRRMAVINESLHPPMDSRVRDACQYISDHLADSHFDIASVAQHVCLSPSRLSHLFRQQLGISVLSWREDQRISQAKLLLSTTRMPIATVGRNVGFDDQLYFSRVFKKCTGASPSEFRAGCE.

Residues Pro-8, Thr-24, Arg-38, Tyr-82, and His-93 each contribute to the alpha-L-arabinopyanose site. Residues 180-279 (RDACQYISDH…GASPSEFRAG (100 aa)) enclose the HTH araC/xylS-type domain. 2 DNA-binding regions (H-T-H motif) span residues 198–219 (ASVA…RQQL) and 246–269 (IATV…KKCT).

As to quaternary structure, homodimer.

It localises to the cytoplasm. Its function is as follows. Transcription factor that regulates the expression of several genes involved in the transport and metabolism of L-arabinose. The sequence is that of Arabinose operon regulatory protein from Salmonella typhimurium (strain LT2 / SGSC1412 / ATCC 700720).